Consider the following 400-residue polypeptide: Subtilisin-like protease 1 (400 aa).

A signal peptide spans Met1–Ala20. Residues Ala21–Asn119 constitute a propeptide that is removed on maturation. One can recognise an Inhibitor I9 domain in the interval Ser42–Gln117. An N-linked (GlcNAc...) asparagine glycan is attached at Asn82. Residues Thr128–Ala400 form the Peptidase S8 domain. Catalysis depends on charge relay system residues Asp160, His192, and Ser345.

It belongs to the peptidase S8 family.

It is found in the secreted. Functionally, major secreted subtilisin-like serine endopeptidase. Mediates the degradation of collagen, the major structural protein in the mammalian host. Degrades the nonhelical regions of collagen that function in the cross-linking of the helical components. May function as virulence factor involved in epidermal wing necrosis observed in white nose syndrome (WNS) in bats. The chain is Subtilisin-like protease 1 from Pseudogymnoascus destructans (strain ATCC MYA-4855 / 20631-21) (Bat white-nose syndrome fungus).